A 221-amino-acid polypeptide reads, in one-letter code: Glutathione peroxidase (221 aa).

A signal peptide spans 1 to 19 (MFIQLLILSYAILLQLIAT). Residue N28 is glycosylated (N-linked (GlcNAc...) asparagine). Residue C72 is part of the active site. N-linked (GlcNAc...) asparagine glycosylation is found at N87 and N90.

Belongs to the glutathione peroxidase family. As to quaternary structure, homotetramer.

It localises to the secreted. Its subcellular location is the extracellular space. The enzyme catalyses 2 glutathione + H2O2 = glutathione disulfide + 2 H2O. The polypeptide is Glutathione peroxidase (Dirofilaria immitis (Canine heartworm)).